The sequence spans 397 residues: F-box protein At3g28330 (397 aa).

The F-box domain occupies 6 to 56 (KKDMDFLTEDLWEIILARLPLKSIITTPKLVCKVWKSIIESRCFRDLFQSL).

This chain is F-box protein At3g28330, found in Arabidopsis thaliana (Mouse-ear cress).